The chain runs to 419 residues: 3-isopropylmalate dehydratase large subunit (419 aa).

3 residues coordinate [4Fe-4S] cluster: Cys-301, Cys-361, and Cys-364.

It belongs to the aconitase/IPM isomerase family. LeuC type 2 subfamily. Heterodimer of LeuC and LeuD. The cofactor is [4Fe-4S] cluster.

It catalyses the reaction (2R,3S)-3-isopropylmalate = (2S)-2-isopropylmalate. Its pathway is amino-acid biosynthesis; L-leucine biosynthesis; L-leucine from 3-methyl-2-oxobutanoate: step 2/4. In terms of biological role, catalyzes the isomerization between 2-isopropylmalate and 3-isopropylmalate, via the formation of 2-isopropylmaleate. This Campylobacter hominis (strain ATCC BAA-381 / DSM 21671 / CCUG 45161 / LMG 19568 / NCTC 13146 / CH001A) protein is 3-isopropylmalate dehydratase large subunit.